Consider the following 173-residue polypeptide: Lens fiber membrane intrinsic protein (173 aa).

Over 1 to 3 (MYS) the chain is Cytoplasmic. A helical membrane pass occupies residues 4-24 (FMGGGLFCAWVGTILLVVATA). Over 25–66 (TDHWMQYRLSGAFAHQGLWRYCLGTKCYLQTESIAYWNATRA) the chain is Extracellular. W43 and W61 each carry a C-linked (Man) tryptophan; partial glycan. Residues 67–87 (FMILSSLCATSGIIMGIVAFA) form a helical membrane-spanning segment. At 88–98 (QQPTFTRLSRP) the chain is on the cytoplasmic side. The helical transmembrane segment at 99-119 (FSAGIMFFASTFFVLLALAIY) threads the bilayer. Over 120–140 (TGVTVSFLGRRFGDWRFSWSY) the chain is Extracellular. A helical membrane pass occupies residues 141-161 (ILGWVALLMTFFAGIFYMCAY). At 162-173 (RMHECRRLSTPR) the chain is on the cytoplasmic side. S170 is subject to Phosphoserine. Residue T171 is modified to Phosphothreonine.

Belongs to the PMP-22/EMP/MP20 family. As to quaternary structure, seems to be associated with itself or another lens membrane component via disulfide bonds. Post-translationally, predominantly monophosphorylated on Ser-170. Only about 15% diphosphorylated on both Ser-170 and Thr-171. C-glycosylated. Trp-43 is more extensively C-glycosylated than Trp-61. C-glycosylation may be involved in membrane trafficking. As to expression, eye lens specific.

The protein localises to the membrane. In terms of biological role, present in the thicker 16-17 nm junctions of mammalian lens fiber cells, where it may contribute to cell junctional organization. Acts as a receptor for calmodulin. May play an important role in both lens development and cataractogenesis. This Bos taurus (Bovine) protein is Lens fiber membrane intrinsic protein (LIM2).